The following is a 620-amino-acid chain: Chaperone protein HscA homolog (620 aa).

Belongs to the heat shock protein 70 family.

Functionally, chaperone involved in the maturation of iron-sulfur cluster-containing proteins. Has a low intrinsic ATPase activity which is markedly stimulated by HscB. This Pseudomonas putida (strain ATCC 47054 / DSM 6125 / CFBP 8728 / NCIMB 11950 / KT2440) protein is Chaperone protein HscA homolog.